The following is a 273-amino-acid chain: Aspartate/glutamate leucyltransferase (273 aa).

The protein belongs to the R-transferase family. Bpt subfamily.

The protein resides in the cytoplasm. The enzyme catalyses N-terminal L-glutamyl-[protein] + L-leucyl-tRNA(Leu) = N-terminal L-leucyl-L-glutamyl-[protein] + tRNA(Leu) + H(+). The catalysed reaction is N-terminal L-aspartyl-[protein] + L-leucyl-tRNA(Leu) = N-terminal L-leucyl-L-aspartyl-[protein] + tRNA(Leu) + H(+). Functionally, functions in the N-end rule pathway of protein degradation where it conjugates Leu from its aminoacyl-tRNA to the N-termini of proteins containing an N-terminal aspartate or glutamate. The polypeptide is Aspartate/glutamate leucyltransferase (Ruegeria pomeroyi (strain ATCC 700808 / DSM 15171 / DSS-3) (Silicibacter pomeroyi)).